Here is a 411-residue protein sequence, read N- to C-terminus: Lysosome-associated membrane glycoprotein 3 (411 aa).

Positions Met1–Gly21 are cleaved as a signal peptide. Over Tyr22–Thr376 the chain is Lumenal. Polar residues predominate over residues His172–Pro192. The disordered stretch occupies residues His172–Pro204. N-linked (GlcNAc...) asparagine glycosylation is present at Asn227. 2 disulfide bridges follow: Cys232/Cys269 and Cys334/Cys371. Residues Val377 to Tyr397 traverse the membrane as a helical segment. Residues Lys398–Ile411 are Cytoplasmic-facing.

This sequence belongs to the LAMP family. Monomer. Interacts with FURIN.

The protein resides in the cell surface. It is found in the lysosome membrane. It localises to the cytoplasmic vesicle membrane. The protein localises to the early endosome membrane. In terms of biological role, lysosomal membrane glycoprotein which plays a role in the unfolded protein response (UPR) that contributes to protein degradation and cell survival during proteasomal dysfunction. Plays a role in the process of fusion of the lysosome with the autophagosome, thereby modulating the autophagic process. Promotes hepatocellular lipogenesis through activation of the PI3K/Akt pathway. May also play a role in dendritic cell function and in adaptive immunity. The chain is Lysosome-associated membrane glycoprotein 3 (Lamp3) from Mus musculus (Mouse).